The chain runs to 234 residues: HTH-type transcriptional regulator ArcR (234 aa).

Residue 40 to 129 participates in a nucleoside 3',5'-cyclic phosphate binding; the sequence is VRHYTKGQVI…MAFLCKANDD (90 aa). The 74-residue stretch at 155 to 228 folds into the HTH crp-type domain; that stretch reads KFAKDRIIKL…HKNWLVSKHL (74 aa). The segment at residues 188–207 is a DNA-binding region (H-T-H motif); sequence IQLMSDMAGISRETAGHIIH.

The protein resides in the cytoplasm. Positively regulates the expression of the arcABDCR operon under anaerobic conditions, thus playing an essential role in arginine catabolism. May also control the expression of genes encoding proteins which are involved in anaerobic metabolism. Can bind cyclic AMP. In Staphylococcus aureus (strain MSSA476), this protein is HTH-type transcriptional regulator ArcR (arcR).